A 320-amino-acid chain; its full sequence is Malate dehydrogenase (320 aa).

NAD(+) is bound by residues 10 to 15 and D34; that span reads GSGMIG. Residues R83 and R89 each contribute to the substrate site. NAD(+) contacts are provided by residues N96 and 119 to 121; that span reads ITN. Residues N121 and R152 each contribute to the substrate site. H176 functions as the Proton acceptor in the catalytic mechanism.

Belongs to the LDH/MDH superfamily. MDH type 3 family.

The enzyme catalyses (S)-malate + NAD(+) = oxaloacetate + NADH + H(+). In terms of biological role, catalyzes the reversible oxidation of malate to oxaloacetate. The protein is Malate dehydrogenase of Rhizobium johnstonii (strain DSM 114642 / LMG 32736 / 3841) (Rhizobium leguminosarum bv. viciae).